The chain runs to 108 residues: MIYMLVFLDRQQLVHIFLFRSRGTTNIIKACYFFFLLFCKLLNAAEAPLLAISLSKFVWLLLRVCKTSYLLLLITMLEGAEYFSLVVGNSICGSGGEGVGCRYPVVLI.

Helical transmembrane passes span 32–52 and 68–88; these read YFFF…LLAI and SYLL…LVVG.

The protein localises to the membrane. This is an uncharacterized protein from Saccharomyces cerevisiae (strain ATCC 204508 / S288c) (Baker's yeast).